The following is a 432-amino-acid chain: MALTKDNEDLVRVGRGTPMGGLMREYWIPALKSTELEAGGSPVRLLLLGEKLVAFREPSGAVGVMDSRCPHRGVSLFMGRVEEGGLRCVYHGWKFSAEGKCVDMPSVRPEDEFKNSVRVARYPVKEMAGVVWVYMGTRKVLPELPRLEVLNLPENEVDVICLQRKSNWLQNLEGEIDTSHFNFLHVGGLHADEVPDDHPLKYTAQVAPQYLVKETALGTCYAAQVPAEEDHTYTRFAHFLFPFWALIPQADIAQNILARAWVPMDDEHTMMFFFRWTGSKAKRLDTPLKSGSPMPGVTLTDMKYKENTTDWYGRWQPLGDESNDWLIDRDLQKVGRVFSGIYGIHAQDQAMTDSMGPIIDHGLEQLAPTDLMIVRTRRRILKALRAHEANGTLPPGVDEADQYFTPRSGYYLTPKSVDWETAYEQRIEGLVR.

The region spanning 27–133 (WIPALKSTEL…VKEMAGVVWV (107 aa)) is the Rieske domain. 4 residues coordinate [2Fe-2S] cluster: Cys69, His71, Cys88, and His91. Fe cation is bound by residues His180 and His185.

This sequence belongs to the bacterial ring-hydroxylating dioxygenase alpha subunit family. As to quaternary structure, this dioxygenase system consists of two proteins: an oxygenase and an oxygenase reductase. It depends on [2Fe-2S] cluster as a cofactor. Fe cation is required as a cofactor.

This is 3-chlorobenzoate-3,4-dioxygenase oxygenase subunit (cbaA) from Comamonas testosteroni (Pseudomonas testosteroni).